We begin with the raw amino-acid sequence, 348 residues long: Probable WRKY transcription factor 27 (348 aa).

Disordered regions lie at residues Val19–Ser52, Thr67–Pro90, Leu133–Arg153, and Gly218–Asn320. Over residues Ser75–Ala85 the composition is skewed to pro residues. The segment covering Leu133–Leu142 has biased composition (low complexity). The segment covering Arg143–Arg153 has biased composition (basic residues). Residues Thr159–Pro225 constitute a DNA-binding region (WRKY). A compositionally biased stretch (polar residues) spans Arg228 to Val242. Over residues Asp274 to Asp315 the composition is skewed to acidic residues.

This sequence belongs to the WRKY group II-e family.

Its subcellular location is the nucleus. Functionally, transcription factor. Interacts specifically with the W box (5'-(T)TGAC[CT]-3'), a frequently occurring elicitor-responsive cis-acting element. The polypeptide is Probable WRKY transcription factor 27 (WRKY27) (Arabidopsis thaliana (Mouse-ear cress)).